Here is a 400-residue protein sequence, read N- to C-terminus: Formate-dependent phosphoribosylglycinamide formyltransferase (400 aa).

Residues 22–23 (EL) and glutamate 82 each bind N(1)-(5-phospho-beta-D-ribosyl)glycinamide. Residues arginine 115, lysine 156, 161-166 (SSGKGQ), 196-199 (EGFI), and glutamate 204 contribute to the ATP site. One can recognise an ATP-grasp domain in the interval 120–309 (RLAAETLCLP…EFALHARAIL (190 aa)). Glutamate 268 and glutamate 280 together coordinate Mg(2+). N(1)-(5-phospho-beta-D-ribosyl)glycinamide-binding positions include aspartate 287, lysine 361, and 368 to 369 (RR).

This sequence belongs to the PurK/PurT family. Homodimer.

It catalyses the reaction N(1)-(5-phospho-beta-D-ribosyl)glycinamide + formate + ATP = N(2)-formyl-N(1)-(5-phospho-beta-D-ribosyl)glycinamide + ADP + phosphate + H(+). It participates in purine metabolism; IMP biosynthesis via de novo pathway; N(2)-formyl-N(1)-(5-phospho-D-ribosyl)glycinamide from N(1)-(5-phospho-D-ribosyl)glycinamide (formate route): step 1/1. Its function is as follows. Involved in the de novo purine biosynthesis. Catalyzes the transfer of formate to 5-phospho-ribosyl-glycinamide (GAR), producing 5-phospho-ribosyl-N-formylglycinamide (FGAR). Formate is provided by PurU via hydrolysis of 10-formyl-tetrahydrofolate. This Xanthomonas euvesicatoria pv. vesicatoria (strain 85-10) (Xanthomonas campestris pv. vesicatoria) protein is Formate-dependent phosphoribosylglycinamide formyltransferase.